The chain runs to 233 residues: 2-C-methyl-D-erythritol 4-phosphate cytidylyltransferase (233 aa).

It belongs to the IspD/TarI cytidylyltransferase family. IspD subfamily.

It carries out the reaction 2-C-methyl-D-erythritol 4-phosphate + CTP + H(+) = 4-CDP-2-C-methyl-D-erythritol + diphosphate. Its pathway is isoprenoid biosynthesis; isopentenyl diphosphate biosynthesis via DXP pathway; isopentenyl diphosphate from 1-deoxy-D-xylulose 5-phosphate: step 2/6. In terms of biological role, catalyzes the formation of 4-diphosphocytidyl-2-C-methyl-D-erythritol from CTP and 2-C-methyl-D-erythritol 4-phosphate (MEP). This Geotalea uraniireducens (strain Rf4) (Geobacter uraniireducens) protein is 2-C-methyl-D-erythritol 4-phosphate cytidylyltransferase.